Consider the following 248-residue polypeptide: Protein UL24 homolog (248 aa).

The segment at Asp-194 to Lys-248 is disordered. Residues Ala-218–Gly-227 show a composition bias toward low complexity.

Belongs to the herpesviridae UL24 family.

Its subcellular location is the virion. It localises to the host cytoplasm. The protein resides in the host nucleus. It is found in the host nucleolus. The protein localises to the host Golgi apparatus. Its function is as follows. May participate in nuclear egress of viral particles. Plays a role in the dispersal of several host nucleolar proteins including NCL/nucleolin and NPM1. Since deletion of host NCL/nucleolin negatively impact on nuclear egress, UL24 supposedly acts on this process through its effect on host nucleoli. The sequence is that of Protein UL24 homolog from Homo sapiens (Human).